The primary structure comprises 148 residues: Lysozyme C-1 (148 aa).

Positions Met1–Ala18 are cleaved as a signal peptide. One can recognise a C-type lysozyme domain in the interval Lys19–Val148. 4 disulfides stabilise this stretch: Cys24/Cys146, Cys48/Cys134, Cys83/Cys99, and Cys95/Cys113. Active-site residues include Glu53 and Asp71.

The protein belongs to the glycosyl hydrolase 22 family. As to quaternary structure, monomer. As to expression, expressed in lung, small intestine and spleen.

The protein localises to the secreted. The enzyme catalyses Hydrolysis of (1-&gt;4)-beta-linkages between N-acetylmuramic acid and N-acetyl-D-glucosamine residues in a peptidoglycan and between N-acetyl-D-glucosamine residues in chitodextrins.. In terms of biological role, lysozymes have primarily a bacteriolytic function; those in tissues and body fluids are associated with the monocyte-macrophage system and enhance the activity of immunoagents. In the intestine they may also have a digestive function. This Rattus norvegicus (Rat) protein is Lysozyme C-1 (Lyz1).